We begin with the raw amino-acid sequence, 134 residues long: Small ribosomal subunit protein uS8 (134 aa).

Belongs to the universal ribosomal protein uS8 family. In terms of assembly, part of the 30S ribosomal subunit. Contacts proteins S5 and S12.

In terms of biological role, one of the primary rRNA binding proteins, it binds directly to 16S rRNA central domain where it helps coordinate assembly of the platform of the 30S subunit. This chain is Small ribosomal subunit protein uS8, found in Fervidobacterium nodosum (strain ATCC 35602 / DSM 5306 / Rt17-B1).